The chain runs to 289 residues: Ribosomal RNA small subunit methyltransferase A (289 aa).

The S-adenosyl-L-methionine site is built by H27, L29, G54, E76, D102, and N123.

The protein belongs to the class I-like SAM-binding methyltransferase superfamily. rRNA adenine N(6)-methyltransferase family. RsmA subfamily.

The protein localises to the cytoplasm. The enzyme catalyses adenosine(1518)/adenosine(1519) in 16S rRNA + 4 S-adenosyl-L-methionine = N(6)-dimethyladenosine(1518)/N(6)-dimethyladenosine(1519) in 16S rRNA + 4 S-adenosyl-L-homocysteine + 4 H(+). In terms of biological role, specifically dimethylates two adjacent adenosines (A1518 and A1519) in the loop of a conserved hairpin near the 3'-end of 16S rRNA in the 30S particle. May play a critical role in biogenesis of 30S subunits. This Maricaulis maris (strain MCS10) (Caulobacter maris) protein is Ribosomal RNA small subunit methyltransferase A.